A 1227-amino-acid polypeptide reads, in one-letter code: DNA-directed RNA polymerase subunit beta (1227 aa).

It belongs to the RNA polymerase beta chain family. The RNAP catalytic core consists of 2 alpha, 1 beta, 1 beta' and 1 omega subunit. When a sigma factor is associated with the core the holoenzyme is formed, which can initiate transcription.

The enzyme catalyses RNA(n) + a ribonucleoside 5'-triphosphate = RNA(n+1) + diphosphate. Its function is as follows. DNA-dependent RNA polymerase catalyzes the transcription of DNA into RNA using the four ribonucleoside triphosphates as substrates. The protein is DNA-directed RNA polymerase subunit beta of Chloroflexus aurantiacus (strain ATCC 29366 / DSM 635 / J-10-fl).